An 89-amino-acid polypeptide reads, in one-letter code: Small ribosomal subunit protein bS20 (89 aa).

This sequence belongs to the bacterial ribosomal protein bS20 family.

Binds directly to 16S ribosomal RNA. This Helicobacter pylori (strain Shi470) protein is Small ribosomal subunit protein bS20.